The following is a 162-amino-acid chain: Transcription elongation factor GreA (162 aa).

Residues 46 to 77 are a coiled coil; it reads RENAEYKAAREEQTRLNNMVTRLQEEIERAQV.

The protein belongs to the GreA/GreB family.

In terms of biological role, necessary for efficient RNA polymerase transcription elongation past template-encoded arresting sites. The arresting sites in DNA have the property of trapping a certain fraction of elongating RNA polymerases that pass through, resulting in locked ternary complexes. Cleavage of the nascent transcript by cleavage factors such as GreA or GreB allows the resumption of elongation from the new 3'terminus. GreA releases sequences of 2 to 3 nucleotides. This Treponema pallidum (strain Nichols) protein is Transcription elongation factor GreA.